The following is a 499-amino-acid chain: Glutamyl-tRNA(Gln) amidotransferase subunit A (499 aa).

Catalysis depends on charge relay system residues Lys75 and Ser150. Ser174 serves as the catalytic Acyl-ester intermediate.

The protein belongs to the amidase family. GatA subfamily. Heterotrimer of A, B and C subunits.

The enzyme catalyses L-glutamyl-tRNA(Gln) + L-glutamine + ATP + H2O = L-glutaminyl-tRNA(Gln) + L-glutamate + ADP + phosphate + H(+). In terms of biological role, allows the formation of correctly charged Gln-tRNA(Gln) through the transamidation of misacylated Glu-tRNA(Gln) in organisms which lack glutaminyl-tRNA synthetase. The reaction takes place in the presence of glutamine and ATP through an activated gamma-phospho-Glu-tRNA(Gln). This Ralstonia pickettii (strain 12J) protein is Glutamyl-tRNA(Gln) amidotransferase subunit A.